We begin with the raw amino-acid sequence, 697 residues long: Envelope glycoprotein G (697 aa).

The N-terminal stretch at M1 to G22 is a signal peptide. The Virion surface segment spans residues G23 to D648. N-linked (GlcNAc...) asparagine; by host glycans are attached at residues N104 and N163. Disordered regions lie at residues H298 to P389 and T402 to P630. A compositionally biased stretch (basic and acidic residues) spans L322 to A335. Low complexity-rich tracts occupy residues D375–P389 and T402–P445. The N-linked (GlcNAc...) asparagine; by host glycan is linked to N435. Composition is skewed to pro residues over residues P446–T457 and P465–P480. Residues G481–P529 are compositionally biased toward low complexity. N510 carries an N-linked (GlcNAc...) asparagine; by host glycan. Pro residues predominate over residues D542–P552. Residues E560–S576 show a composition bias toward acidic residues. Pro residues predominate over residues P587–P603. A helical membrane pass occupies residues I649–A669. Residues A670 to D697 are Intravirion-facing.

The protein belongs to the alphaherpesvirinae glycoprotein G family.

It localises to the virion membrane. In terms of biological role, chemokine-binding protein that inhibits neutrophils' chemotaxis. In Homo sapiens (Human), this protein is Envelope glycoprotein G (gG).